A 392-amino-acid chain; its full sequence is Alpha-(1,3)-fucosyltransferase fut-6 (392 aa).

Over 1-12 (MSQIGGATCTWR) the chain is Cytoplasmic. Residues 13-35 (YLGRFVTLGIYASVALFVWYTLV) traverse the membrane as a helical; Signal-anchor for type II membrane protein segment. The Lumenal segment spans residues 36-392 (PTRSKHKDSI…CNNQIASKYL (357 aa)). N-linked (GlcNAc...) asparagine glycosylation is present at N158.

It belongs to the glycosyltransferase 10 family. Unlike other alpha-(1,3)-fucosyltransferases, appears not to require a divalent metal cation as cofactor. is required as a cofactor.

It is found in the golgi apparatus. It localises to the golgi stack membrane. It participates in protein modification; protein glycosylation. Inhibited by divalent metal cations. In terms of biological role, involved in the fucosylation of N-glycans. Preferentially catalyzes the addition of fucose in alpha 1-3 linkage to the distal GlcNAc residue in N-glycans. Catalyzes the transfer of fucose to Gal-beta-1-4-GlcNAc-alpha-pNP (LN-pNP) and Gal-beta-1-4-GlcNAc-beta-1-3-Gal-beta-1-4-Glc (LNnT). Unlike alpha-(1,3)-fucosyltransferase fut-1, does not transfer fucose to Man-alpha-1-3-(Man-alpha-1-6)-Man-beta-1-4-GlcNAc-beta-1-4-GlcNAc-beta-1-Asn (M3), Man-alpha-1-3-(Man-alpha-1-6)-Man-beta-1-4-GlcNAc-beta-1-4-(Fuc-alpha-1-6)-GlcNAc-beta-1-Asn (M3F6) and GlcNAc-beta-1-2-Man-alpha-1-3-(GlcNAc-beta-1-2-Man-alpha-1-6)-Man-beta-1-4-GlcNAc-beta-1-4(Fuc-alpha-1-6)-GlcNAc-beta-1-Asn (GnM3F6). The polypeptide is Alpha-(1,3)-fucosyltransferase fut-6 (Caenorhabditis elegans).